Reading from the N-terminus, the 539-residue chain is GMP synthase [glutamine-hydrolyzing] (539 aa).

The 200-residue stretch at 4–203 (KILILDFGSQ…VHDICGCKSD (200 aa)) folds into the Glutamine amidotransferase type-1 domain. The active-site Nucleophile is Cys-82. Active-site residues include His-177 and Glu-179. Residues 204-395 (WNMPDYIAEA…LGLPHDMVYR (192 aa)) enclose the GMPS ATP-PPase domain. ATP is bound at residue 231–237 (SGGVDSS).

As to quaternary structure, homodimer.

The catalysed reaction is XMP + L-glutamine + ATP + H2O = GMP + L-glutamate + AMP + diphosphate + 2 H(+). It functions in the pathway purine metabolism; GMP biosynthesis; GMP from XMP (L-Gln route): step 1/1. In terms of biological role, catalyzes the synthesis of GMP from XMP. The sequence is that of GMP synthase [glutamine-hydrolyzing] from Herminiimonas arsenicoxydans.